The following is a 583-amino-acid chain: Sphingomyelin phosphodiesterase A (583 aa).

A signal peptide spans 1 to 21 (MKSIPIILLVLIGLLLASVYS). One can recognise a Saposin B-type domain in the interval 51-133 (IQLSCDVCQI…GYFKICSATG (83 aa)). 3 cysteine pairs are disulfide-bonded: Cys-55-Cys-129, Cys-58-Cys-123, and Cys-86-Cys-97. A glycan (N-linked (GlcNAc...) asparagine) is linked at Asn-72. A glycan (N-linked (GlcNAc...) asparagine) is linked at Asn-182. The Zn(2+) site is built by Asp-193 and His-195. A disulfide bond links Cys-214 and Cys-229. Residues Asp-258 and Asn-298 each coordinate Zn(2+). N-linked (GlcNAc...) asparagine glycosylation is present at Asn-377. The Zn(2+) site is built by His-401, His-436, and His-438. Residues Asn-495, Asn-500, Asn-537, and Asn-547 are each glycosylated (N-linked (GlcNAc...) asparagine). A disulfide bridge links Cys-567 with Cys-580.

The protein belongs to the acid sphingomyelinase family. Requires Zn(2+) as cofactor.

The protein resides in the secreted. In terms of biological role, converts sphingomyelin to ceramide. This Dictyostelium discoideum (Social amoeba) protein is Sphingomyelin phosphodiesterase A (sgmA).